The chain runs to 222 residues: Ribonuclease 3 (222 aa).

Positions Met-1–Ala-19 are cleaved as a signal peptide. Gln-30 is a binding site for RNA. A disulfide bond links Cys-36 and Cys-42. RNA is bound by residues His-57, Phe-107, His-110 to Glu-111, and Lys-114 to His-115. His-57 (proton donor) is an active-site residue. Intrachain disulfides connect Cys-72–Cys-118, Cys-178–Cys-213, and Cys-194–Cys-205. Glu-111 is an active-site residue. Catalysis depends on His-115, which acts as the Proton acceptor.

The protein belongs to the RNase T2 family.

It carries out the reaction a ribonucleotidyl-ribonucleotide-RNA + H2O = a 3'-end 3'-phospho-ribonucleotide-RNA + a 5'-end dephospho-ribonucleoside-RNA + H(+). May remobilize phosphate, particularly when cells senesce or when phosphate becomes limiting. This Arabidopsis thaliana (Mouse-ear cress) protein is Ribonuclease 3 (RNS3).